A 362-amino-acid polypeptide reads, in one-letter code: Peptide chain release factor 1 (362 aa).

Residue Q237 is modified to N5-methylglutamine.

Belongs to the prokaryotic/mitochondrial release factor family. Post-translationally, methylated by PrmC. Methylation increases the termination efficiency of RF1.

The protein resides in the cytoplasm. Peptide chain release factor 1 directs the termination of translation in response to the peptide chain termination codons UAG and UAA. This Vibrio vulnificus (strain CMCP6) protein is Peptide chain release factor 1.